The sequence spans 147 residues: Putative acetyltransferase BSU40680 (147 aa).

The 144-residue stretch at 1 to 144 (MNVKKITSEQ…PHVLMTKQDD (144 aa)) folds into the N-acetyltransferase domain. CoA is bound by residues 74 to 76 (ICI) and 115 to 117 (GFY).

It belongs to the UPF0039 (ElaA) family.

Could catalyze the transfer of an acetyl group from acetyl coenzyme A (AcCoA) to an acceptor substrate and release both CoA and the acetylated product. The polypeptide is Putative acetyltransferase BSU40680 (yybD) (Bacillus subtilis (strain 168)).